The sequence spans 223 residues: N-terminal Xaa-Pro-Lys N-methyltransferase 1 (223 aa).

Position 1 is an N-acetylmethionine (Met-1). Thr-2 bears the N-acetylthreonine; in N-terminal Xaa-Pro-Lys N-methyltransferase 1, N-terminally processed mark. Residues Gly-69, Arg-74, 91-93 (DVT), 119-120 (LQ), and Gln-135 each bind S-adenosyl-L-methionine.

The protein belongs to the methyltransferase superfamily. NTM1 family.

The protein resides in the nucleus. The catalysed reaction is N-terminal L-alanyl-L-prolyl-L-lysyl-[protein] + 3 S-adenosyl-L-methionine = N-terminal N,N,N-trimethyl-L-alanyl-L-prolyl-L-lysyl-[protein] + 3 S-adenosyl-L-homocysteine + 3 H(+). It catalyses the reaction N-terminal L-seryl-L-prolyl-L-lysyl-[protein] + 3 S-adenosyl-L-methionine = N-terminal N,N,N-trimethyl-L-seryl-L-prolyl-L-lysyl-[protein] + 3 S-adenosyl-L-homocysteine + 3 H(+). It carries out the reaction N-terminal L-prolyl-L-prolyl-L-lysyl-[protein] + 2 S-adenosyl-L-methionine = N-terminal N,N-dimethyl-L-prolyl-L-prolyl-L-lysyl-[protein] + 2 S-adenosyl-L-homocysteine + 2 H(+). Its function is as follows. Distributive alpha-N-methyltransferase that methylates the N-terminus of target proteins containing the N-terminal motif [Ala/Gly/Pro/Ser]-Pro-Lys when the initiator Met is cleaved. Specifically catalyzes mono-, di- or tri-methylation of the exposed alpha-amino group of the Ala, Gly or Ser residue in the [Ala/Gly/Ser]-Pro-Lys motif and mono- or di-methylation of Pro in the Pro-Pro-Lys motif. Some of the substrates may be primed by NTMT2-mediated monomethylation. Catalyzes the trimethylation of the N-terminal Gly in CENPA (after removal of Met-1). Responsible for the N-terminal methylation of KLHL31, MYL2, MYL3, RB1, RCC1, RPL23A and SET. Required during mitosis for normal bipolar spindle formation and chromosome segregation via its action on RCC1. This is N-terminal Xaa-Pro-Lys N-methyltransferase 1 (NTMT1) from Ailuropoda melanoleuca (Giant panda).